Here is a 364-residue protein sequence, read N- to C-terminus: Inner membrane ABC transporter permease protein YejB (364 aa).

The Periplasmic segment spans residues 1–8 (MGAYLIRR). The helical transmembrane segment at 9-29 (LLLVIPTLWAIITINFFIVQI) threads the bilayer. At 30–37 (APGGPVDQ) the chain is on the cytoplasmic side. Residues 38 to 58 (AIAAIEFGNAGVLPGAGGEGV) traverse the membrane as a helical segment. Residues 59-135 (RASHAQTGVG…LTLIKDSLPV (77 aa)) lie on the Periplasmic side of the membrane. Residues 133–348 (LPVSITLGLW…LIGLLLNIVS (216 aa)) enclose the ABC transmembrane type-1 domain. Residues 136–156 (SITLGLWSTLIIYLVSIPLGI) traverse the membrane as a helical segment. At 157-172 (RKAVYNGSRFDVWSSA) the chain is on the cytoplasmic side. The helical transmembrane segment at 173-193 (FIIIGYAIPAFLFAILLIVFF) threads the bilayer. The Periplasmic portion of the chain corresponds to 194–224 (AGGSYFDLFPLRGLVSANFDSLPWYQKITDY). Residues 225-245 (LWHITLPVLATVIGGFAALTM) traverse the membrane as a helical segment. Residues 246–284 (LTKNSFLDEVRKQYVVTARAKGVSEKNILWKHVFRNAML) are Cytoplasmic-facing. The chain crosses the membrane as a helical span at residues 285–305 (LVIAGFPATFISMFFTGSLLI). The Periplasmic portion of the chain corresponds to 306-326 (EVMFSLNGLGLLGYEATVSRD). Residues 327–347 (YPVMFGTLYIFTLIGLLLNIV) traverse the membrane as a helical segment. The Cytoplasmic segment spans residues 348 to 364 (SDISYTLVDPRIDFEGR).

This sequence belongs to the binding-protein-dependent transport system permease family. OppBC subfamily.

Its subcellular location is the cell inner membrane. Functionally, probably part of a binding-protein-dependent transport system. Probably responsible for the translocation of the substrate across the membrane. In Escherichia coli O157:H7, this protein is Inner membrane ABC transporter permease protein YejB (yejB).